The sequence spans 977 residues: MARSRTAGRCNPFAFYRVPVTVFVTLIYVALLAPIIVVHHILPAVPESDVEGLDLHEAWRDLQHLTNGFHPYNSHKNDEVRSWLLTRIDEIVSTNVKDAKQQDGVRTFVFDDNQSNLTVVQSNLGVYFEGTNIIVYICGQEDDKREWWKEPGLSPSGKGGVLVNAHYDSVSTGYGATDDGVGVISCLQLIKYFTTPGHEPTRGLVVLLNNGEEDFLNGARVYSQHPISKLPHTFLNLEGAGAGGRATLFRSSDTEVTKFYQRSPYPFGSVFSDAGFKLGMIRSQTDYIVFEGDMGLRGLDVAFMEPRARYHTNQDDAKHTSQQSLWHMLSAAVATTEGLVSDTSHDFEGRPQGPGKVPSGTGSGAVWFDLFGTAFAVFEIHTLFALSVTLLIVGPLTLFITSIILANQDRMYLFGISVPVDDGFGSVPLRGWRGFFRFPFIFGSTTASVVALAYLMAKINPMIAHSSEYAVWSMMISAWVFVAWFLSRIANFARPSALHRIYVLTWMFLLTWVLLVITTVYENRDGIASGYFVIFYAFGTFMATWISYLELFSLPKKSDFANKVSGQISSRPTSLGGSRLLTPSGESVGQHPEDEEPTESTSLLRGQRTSFANYTRPVEDDGDGDLLSTGVSTDVSEARDFNVYGYEQPWSANLPKWTWILQFLLIAPIVIILIGQLGLLITSAIHQTMQDGSSTLVPYLIIALLTTFLFMPTLPFIHRYTYHIPTFLFLIFVATLVYNLVAFPFSGNNRTKLFFLQEVDLDTGANRVSLTGIQPFVSDAVASIPSADGQNISCIPKMDRTECSWESSLVPHVITHPGSEKEETPLNEWVKYKATRLEPGSQNSNRAQIKISGLNTRGCLLHFDKPITRFHVTGSAIDSRFPSNPSLEDGTEDGVREIRLWSRTWGNQWVVDAEWASDEDVNNEEDTLTGKATCLWSDANTQGAIPALDEVIQYSPDWVAITKLDAGLVKGSRSFEV.

Over 1 to 17 (MARSRTAGRCNPFAFYR) the chain is Cytoplasmic. Residues 18 to 38 (VPVTVFVTLIYVALLAPIIVV) traverse the membrane as a helical segment. Residues 39-383 (HHILPAVPES…AFAVFEIHTL (345 aa)) lie on the Vacuolar side of the membrane. Residues Asn113 and Asn116 are each glycosylated (N-linked (GlcNAc...) asparagine). The Zn(2+) site is built by His166 and Asp178. Glu212 (proton acceptor) is an active-site residue. Zn(2+) contacts are provided by Glu213, Glu238, and His311. The chain crosses the membrane as a helical span at residues 384-404 (FALSVTLLIVGPLTLFITSII). Residues 405 to 438 (LANQDRMYLFGISVPVDDGFGSVPLRGWRGFFRF) lie on the Cytoplasmic side of the membrane. The helical transmembrane segment at 439–459 (PFIFGSTTASVVALAYLMAKI) threads the bilayer. At 460–469 (NPMIAHSSEY) the chain is on the vacuolar side. The chain crosses the membrane as a helical span at residues 470–490 (AVWSMMISAWVFVAWFLSRIA). The Cytoplasmic segment spans residues 491-500 (NFARPSALHR). The chain crosses the membrane as a helical span at residues 501–521 (IYVLTWMFLLTWVLLVITTVY). Topologically, residues 522 to 525 (ENRD) are vacuolar. The chain crosses the membrane as a helical span at residues 526 to 546 (GIASGYFVIFYAFGTFMATWI). Residues 547-659 (SYLELFSLPK…WSANLPKWTW (113 aa)) lie on the Cytoplasmic side of the membrane. Polar residues predominate over residues 566–576 (GQISSRPTSLG). The segment at 566–604 (GQISSRPTSLGGSRLLTPSGESVGQHPEDEEPTESTSLL) is disordered. A helical transmembrane segment spans residues 660–680 (ILQFLLIAPIVIILIGQLGLL). At 681-696 (ITSAIHQTMQDGSSTL) the chain is on the vacuolar side. A helical membrane pass occupies residues 697-717 (VPYLIIALLTTFLFMPTLPFI). Residues 718-726 (HRYTYHIPT) are Cytoplasmic-facing. Residues 727-747 (FLFLIFVATLVYNLVAFPFSG) form a helical membrane-spanning segment. The Vacuolar portion of the chain corresponds to 748–977 (NNRTKLFFLQ…LVKGSRSFEV (230 aa)). 2 N-linked (GlcNAc...) asparagine glycosylation sites follow: Asn749 and Asn791.

Belongs to the peptidase M28 family. Zn(2+) is required as a cofactor.

The protein localises to the vacuole membrane. May be involved in vacuolar sorting and osmoregulation. The chain is Vacuolar membrane protease from Talaromyces marneffei (strain ATCC 18224 / CBS 334.59 / QM 7333) (Penicillium marneffei).